A 359-amino-acid chain; its full sequence is Cytoplasmic tRNA 2-thiolation protein 1 (359 aa).

This sequence belongs to the TtcA family. CTU1/NCS6/ATPBD3 subfamily. Interacts with NCS2 and URM1. May act by forming a heterodimer with NCS2. Component of a large molecular weight complex of more than 250 kDa.

The protein resides in the cytoplasm. It is found in the mitochondrion. The protein operates within tRNA modification; 5-methoxycarbonylmethyl-2-thiouridine-tRNA biosynthesis. Its function is as follows. Plays a central role in 2-thiolation of mcm(5)S(2)U at tRNA wobble positions of tRNA(Lys), tRNA(Glu) and tRNA(Gln). Directly binds tRNAs and probably acts by catalyzing adenylation of tRNAs, an intermediate required for 2-thiolation. It is unclear whether it acts as a sulfurtransferase that transfers sulfur from thiocarboxylated URM1 onto the uridine of tRNAs at wobble position. Prior mcm(5) tRNA modification by the elongator complex is required for 2-thiolation. May also be involved in protein urmylation. This is Cytoplasmic tRNA 2-thiolation protein 1 from Saccharomyces cerevisiae (strain RM11-1a) (Baker's yeast).